The following is a 174-amino-acid chain: Early E1A protein (174 aa).

The tract at residues 40–48 is interaction with RB1 in competition with E2F1; that stretch reads PSLHDLFDL. The LXCXE motif, interaction with host RB1 motif lies at 106–110; it reads LLCLE. Residues 145 to 163 fold into a zinc finger; the sequence is CLRCAYYQEQGENSICGLC.

The protein belongs to the adenoviridae E1A protein family. As to quaternary structure, interacts with host UBE2I; this interaction interferes with polySUMOylation. Interacts with host RB1; this interaction induces the aberrant dissociation of RB1-E2F1 complex thereby disrupting the activity of RB1 and activating E2F1-regulated genes. Interacts with host ATF7; the interaction enhances ATF7-mediated viral transactivation activity which requires the zinc binding domains of both proteins. Isoform early E1A 32 kDa protein and isoform early E1A 26 kDa protein interact (via N-terminus) with CUL1 and E3 ubiquitin ligase RBX1; these interactions inhibit RBX1-CUL1-dependent elongation reaction of ubiquitin chains and attenuate ubiquitination of SCF(FBXW7) target proteins. Interacts (via PXLXP motif) with host ZMYND11/BS69 (via MYND-type zinc finger); this interaction inhibits E1A mediated transactivation. Interacts with host EP300; this interaction stimulates the acetylation of RB1 by recruiting EP300 and RB1 into a multimeric-protein complex. Interacts with host CTBP1 and CTBP2; this interaction seems to potentiate viral replication. Interacts with host DCAF7. Interacts with host DYRK1A. Interacts with host KPNA4; this interaction allows E1A import into the host nucleus. Interacts with host EP400; this interaction stabilizes MYC. Interacts with host TBP protein; this interaction probably disrupts the TBP-TATA complex.

It localises to the host nucleus. Plays a role in viral genome replication by driving entry of quiescent cells into the cell cycle. Stimulation of progression from G1 to S phase allows the virus to efficiently use the cellular DNA replicating machinery to achieve viral genome replication. E1A protein has both transforming and trans-activating activities. Induces the disassembly of the E2F1 transcription factor from RB1 by direct competition for the same binding site on RB1, with subsequent transcriptional activation of E2F1-regulated S-phase genes and of the E2 region of the adenoviral genome. Release of E2F1 leads to the ARF-mediated inhibition of MDM2 and causes TP53/p53 to accumulate because it is not targeted for degradation by MDM2-mediated ubiquitination anymore. This increase in TP53, in turn, would arrest the cell proliferation and direct its death but this effect is counteracted by the viral protein E1B-55K. Inactivation of the ability of RB1 to arrest the cell cycle is critical for cellular transformation, uncontrolled cellular growth and proliferation induced by viral infection. Interaction with RBX1 and CUL1 inhibits ubiquitination of the proteins targeted by SCF(FBXW7) ubiquitin ligase complex, and may be linked to unregulated host cell proliferation. The tumorigenesis-restraining activity of E1A may be related to the disruption of the host CtBP-CtIP complex through the CtBP binding motif. The polypeptide is Early E1A protein (Canine adenovirus serotype 1 (strain RI261) (CAdV-1)).